A 198-amino-acid chain; its full sequence is Protein GrpE (198 aa).

A compositionally biased stretch (basic and acidic residues) spans 1-18; it reads MSEQEQKVEIPEVEKQEE. Residues 1-33 are disordered; that stretch reads MSEQEQKVEIPEVEKQEEVVVEETQQAEHSQEF.

The protein belongs to the GrpE family. Homodimer.

The protein localises to the cytoplasm. In terms of biological role, participates actively in the response to hyperosmotic and heat shock by preventing the aggregation of stress-denatured proteins, in association with DnaK and GrpE. It is the nucleotide exchange factor for DnaK and may function as a thermosensor. Unfolded proteins bind initially to DnaJ; upon interaction with the DnaJ-bound protein, DnaK hydrolyzes its bound ATP, resulting in the formation of a stable complex. GrpE releases ADP from DnaK; ATP binding to DnaK triggers the release of the substrate protein, thus completing the reaction cycle. Several rounds of ATP-dependent interactions between DnaJ, DnaK and GrpE are required for fully efficient folding. In Haemophilus influenzae (strain ATCC 51907 / DSM 11121 / KW20 / Rd), this protein is Protein GrpE.